A 638-amino-acid polypeptide reads, in one-letter code: MATAATAAAALTGATTATPKSRRRAHHLATRRALAAPIRCSALSRATPTAPPATPLRPWGPNEPRKGSDILVEALERCGVRDVFAYPGGASMEIHQALTRSPVIANHLFRHEQGEAFAASAYARSSGRVGVCIATSGPGATNLVSALADALLDSVPMVAITGQVPRRMIGTDAFQETPIVEVTRSITKHNYLVLDVDDIPRVVQEAFFLASSGRPGPVLVDIPKDIQQQMAVPAWDTPMSLPGYIARLPKPPATEFLEQVLRLVGESRRPVLYVGGGCAASGEELCRFVELTGIPVTTTLMGLGNFPSDDPLSLRMLGMHGTVYANYAVDKADLLLAFGVRFDDRVTGKIEAFAGRAKIVHIDIDPAEIGKNKQPHVSICADVKLALQGMNTLLEGSTSKKSFDFGSWHDELDQQKREFPLGYKIFNEEIQPQYAIQVLDELTKGEAIIATGVGQHQMWAAQYYTYKRPRQWLSSAGLGAMGFGLPAAAGAAVANPGVTVVDIDGDGSFLMNIQELAMIRIENLPVKVFVLNNQHLGMVVQWEDRFYKANRAHTFLGNPENESEIYPDFVAIAKGFNIPAVRVTKKSEVHAAIKKMLEAPGPYLLDIIVPHQEHVLPMIPSGGAFKDMILDGDGRTVY.

A chloroplast-targeting transit peptide spans Met-1–Arg-39. The tract at residues Ser-44–Gly-67 is disordered. Glu-112 contributes to the thiamine diphosphate binding site. A disulfide bridge connects residues Cys-132 and Cys-278. FAD-binding positions include Arg-214, His-320–Arg-341, and Asp-363–Asp-382. Positions Gln-455–His-535 are thiamine pyrophosphate binding. 2 residues coordinate Mg(2+): Asp-506 and Asn-533.

Belongs to the TPP enzyme family. The cofactor is Mg(2+). Thiamine diphosphate is required as a cofactor.

It is found in the plastid. Its subcellular location is the chloroplast. The catalysed reaction is 2 pyruvate + H(+) = (2S)-2-acetolactate + CO2. It participates in amino-acid biosynthesis; L-isoleucine biosynthesis; L-isoleucine from 2-oxobutanoate: step 1/4. It functions in the pathway amino-acid biosynthesis; L-valine biosynthesis; L-valine from pyruvate: step 1/4. The sequence is that of Acetolactate synthase 2, chloroplastic (ALS2) from Zea mays (Maize).